The primary structure comprises 245 residues: 1-(5-phosphoribosyl)-5-[(5-phosphoribosylamino)methylideneamino] imidazole-4-carboxamide isomerase (245 aa).

The active-site Proton acceptor is D7. The active-site Proton donor is the D129.

The protein belongs to the HisA/HisF family.

It localises to the cytoplasm. The catalysed reaction is 1-(5-phospho-beta-D-ribosyl)-5-[(5-phospho-beta-D-ribosylamino)methylideneamino]imidazole-4-carboxamide = 5-[(5-phospho-1-deoxy-D-ribulos-1-ylimino)methylamino]-1-(5-phospho-beta-D-ribosyl)imidazole-4-carboxamide. The protein operates within amino-acid biosynthesis; L-histidine biosynthesis; L-histidine from 5-phospho-alpha-D-ribose 1-diphosphate: step 4/9. The protein is 1-(5-phosphoribosyl)-5-[(5-phosphoribosylamino)methylideneamino] imidazole-4-carboxamide isomerase of Shigella flexneri serotype 5b (strain 8401).